Here is a 296-residue protein sequence, read N- to C-terminus: uncharacterized protein (296 aa).

Transmembrane regions (helical) follow at residues 1–21, 30–50, 71–91, 92–112, 113–133, and 142–162; these read MVNLLFLFFIMSFFPNNIFDY, LITASLKILFALAILLIGFWL, FISFAGNISYYLLLVVFFVLC, LAQLGIQTSSLVALLGASTLA, IGLALQGSLANVAGGILLVLF, and IEVAGIEGIVESIEILSTTIC.

It belongs to the MscS (TC 1.A.23) family.

It localises to the cell membrane. This is an uncharacterized protein from Synechocystis sp. (strain ATCC 27184 / PCC 6803 / Kazusa).